The chain runs to 202 residues: 3-isopropylmalate dehydratase small subunit (202 aa).

Belongs to the LeuD family. LeuD type 1 subfamily. In terms of assembly, heterodimer of LeuC and LeuD.

The catalysed reaction is (2R,3S)-3-isopropylmalate = (2S)-2-isopropylmalate. It participates in amino-acid biosynthesis; L-leucine biosynthesis; L-leucine from 3-methyl-2-oxobutanoate: step 2/4. Catalyzes the isomerization between 2-isopropylmalate and 3-isopropylmalate, via the formation of 2-isopropylmaleate. The chain is 3-isopropylmalate dehydratase small subunit from Buchnera aphidicola subsp. Pemphigus spyrothecae.